The sequence spans 201 residues: Putative Ras-related protein Rab-1C (201 aa).

Residues 15 to 23 (GDSGVGKSC), 33 to 40 (YTESYIST), and 63 to 67 (DTAGQ) contribute to the GTP site. The Effector region motif lies at 37–45 (YISTIGVDF). S76 is modified ((Microbial infection) O-(2-cholinephosphoryl)serine). Residues 121–124 (NKSD) and 151–153 (SAK) each bind GTP. The disordered stretch occupies residues 174-201 (GPGAASGGERPNLKIDSTPVKPAGGGCC). Residues C200 and C201 are each lipidated (S-geranylgeranyl cysteine).

The protein belongs to the small GTPase superfamily. Rab family. In terms of processing, (Microbial infection) Phosphocholinated at Ser-76 by L.pneumophila AnkX, leading to displace GDP dissociation inhibitors (GDI). Both GDP-bound and GTP-bound forms can be phosphocholinated. Dephosphocholinated by L.pneumophila Lem3, restoring accessibility to L.pneumophila GTPase effector LepB. (Microbial infection) Glycosylated by S.typhimurium protein Ssek3: arginine GlcNAcylation prevents GTPase activity, thereby disrupting vesicular protein transport from the endoplasmic reticulum (ER) to the Golgi compartment.

The protein resides in the membrane. Its subcellular location is the cytoplasm. The enzyme catalyses GTP + H2O = GDP + phosphate + H(+). Protein transport. Probably involved in vesicular traffic. The chain is Putative Ras-related protein Rab-1C (RAB1C) from Homo sapiens (Human).